The chain runs to 30 residues: KIPCGESCVWIPCLTSVFNCKCENKVCYHD.

Residues 1-30 constitute a cross-link (cyclopeptide (Lys-Asp)); that stretch reads KIPCGESCVWIPCLTSVFNCKCENKVCYHD. Cystine bridges form between Cys4/Cys20, Cys8/Cys22, and Cys13/Cys27.

This is a cyclic peptide.

Probably participates in a plant defense mechanism. Inhibits the cytopathic effects of the human immunodeficiency virus. This is Circulin-E from Chassalia parviflora.